Reading from the N-terminus, the 277-residue chain is Shikimate dehydrogenase (NADP(+)) (277 aa).

Shikimate contacts are provided by residues 15-17 and Thr62; that span reads SLS. Lys66 acts as the Proton acceptor in catalysis. Residues Asn87 and Asp102 each contribute to the shikimate site. NADP(+) contacts are provided by residues 127 to 131, 151 to 156, and Ile219; these read GSGGA and NRTVDK. Tyr221 contacts shikimate. Residue Gly242 participates in NADP(+) binding.

It belongs to the shikimate dehydrogenase family. As to quaternary structure, homodimer.

It carries out the reaction shikimate + NADP(+) = 3-dehydroshikimate + NADPH + H(+). It functions in the pathway metabolic intermediate biosynthesis; chorismate biosynthesis; chorismate from D-erythrose 4-phosphate and phosphoenolpyruvate: step 4/7. Its function is as follows. Involved in the biosynthesis of the chorismate, which leads to the biosynthesis of aromatic amino acids. Catalyzes the reversible NADPH linked reduction of 3-dehydroshikimate (DHSA) to yield shikimate (SA). The protein is Shikimate dehydrogenase (NADP(+)) of Bacillus cereus (strain B4264).